The following is a 146-amino-acid chain: Flavodoxin (146 aa).

Positions A4–L143 constitute a Flavodoxin-like domain.

The protein belongs to the flavodoxin family. FMN serves as cofactor.

Functionally, electron-transfer proteins that function in various electron transport systems in microorganisms. Functionally interchangeable with ferredoxin. This Megalodesulfovibrio gigas (strain ATCC 19364 / DSM 1382 / NCIMB 9332 / VKM B-1759) (Desulfovibrio gigas) protein is Flavodoxin.